A 296-amino-acid polypeptide reads, in one-letter code: MVVSLSLHASSSIRKSKTKASLCLDSLPEDLLVEISSCTGASSLSAVRNLRLVSKSFRRICDEKYVFYRLSLKEIEFLPWHENSAKFIERCTESRNPEALFQKGFINYFRDKLQDRGLEYLAEAAEKGIKEAKYVYGVILICLGGKTKQKGFEILSSVIKQLMSTTMNELVEFRYKIQKIRYGFWWSDNTVVEQLKTAYVSEKCKCDCKTRMLLLVMNRGWYLFGDETDLDFSSACELYLYINRNFPFEAKKSKIDGEIYWACEFEPNRFVRTEPNRGLDKSVRLRLIEYNRSVSV.

The F-box domain occupies 21 to 70 (SLCLDSLPEDLLVEISSCTGASSLSAVRNLRLVSKSFRRICDEKYVFYRL).

The chain is Putative F-box protein At1g67623 from Arabidopsis thaliana (Mouse-ear cress).